We begin with the raw amino-acid sequence, 314 residues long: Formimidoylglutamase (314 aa).

His127, Asp151, His153, Asp155, Asp239, and Asp241 together coordinate Mn(2+).

This sequence belongs to the arginase family. Mn(2+) is required as a cofactor.

The enzyme catalyses N-formimidoyl-L-glutamate + H2O = formamide + L-glutamate. Its pathway is amino-acid degradation; L-histidine degradation into L-glutamate; L-glutamate from N-formimidoyl-L-glutamate (hydrolase route): step 1/1. Catalyzes the conversion of N-formimidoyl-L-glutamate to L-glutamate and formamide. The polypeptide is Formimidoylglutamase (Corynebacterium efficiens (strain DSM 44549 / YS-314 / AJ 12310 / JCM 11189 / NBRC 100395)).